We begin with the raw amino-acid sequence, 354 residues long: S-adenosylmethionine:tRNA ribosyltransferase-isomerase (354 aa).

This sequence belongs to the QueA family. Monomer.

It localises to the cytoplasm. The catalysed reaction is 7-aminomethyl-7-carbaguanosine(34) in tRNA + S-adenosyl-L-methionine = epoxyqueuosine(34) in tRNA + adenine + L-methionine + 2 H(+). The protein operates within tRNA modification; tRNA-queuosine biosynthesis. In terms of biological role, transfers and isomerizes the ribose moiety from AdoMet to the 7-aminomethyl group of 7-deazaguanine (preQ1-tRNA) to give epoxyqueuosine (oQ-tRNA). This chain is S-adenosylmethionine:tRNA ribosyltransferase-isomerase, found in Salmonella paratyphi A (strain ATCC 9150 / SARB42).